The sequence spans 242 residues: UPF0309 protein Oant_1457 (242 aa).

Residues 30–214 (AAELITAAAL…AKLVGKGDAP (185 aa)) form the SIS domain.

The protein belongs to the UPF0309 family.

This Brucella anthropi (strain ATCC 49188 / DSM 6882 / CCUG 24695 / JCM 21032 / LMG 3331 / NBRC 15819 / NCTC 12168 / Alc 37) (Ochrobactrum anthropi) protein is UPF0309 protein Oant_1457.